Here is a 509-residue protein sequence, read N- to C-terminus: Probable cytochrome P450 513A1 (509 aa).

The chain crosses the membrane as a helical span at residues asparagine 2–glutamine 19. Cysteine 454 lines the heme pocket.

The protein belongs to the cytochrome P450 family. Heme serves as cofactor.

Its subcellular location is the membrane. This is Probable cytochrome P450 513A1 (cyp513A1) from Dictyostelium discoideum (Social amoeba).